We begin with the raw amino-acid sequence, 453 residues long: Exodeoxyribonuclease 7 large subunit (453 aa).

It belongs to the XseA family. As to quaternary structure, heterooligomer composed of large and small subunits.

Its subcellular location is the cytoplasm. The enzyme catalyses Exonucleolytic cleavage in either 5'- to 3'- or 3'- to 5'-direction to yield nucleoside 5'-phosphates.. Bidirectionally degrades single-stranded DNA into large acid-insoluble oligonucleotides, which are then degraded further into small acid-soluble oligonucleotides. The chain is Exodeoxyribonuclease 7 large subunit from Rickettsia typhi (strain ATCC VR-144 / Wilmington).